The chain runs to 183 residues: ATP synthase subunit delta (183 aa).

Belongs to the ATPase delta chain family. F-type ATPases have 2 components, F(1) - the catalytic core - and F(0) - the membrane proton channel. F(1) has five subunits: alpha(3), beta(3), gamma(1), delta(1), epsilon(1). F(0) has three main subunits: a(1), b(2) and c(10-14). The alpha and beta chains form an alternating ring which encloses part of the gamma chain. F(1) is attached to F(0) by a central stalk formed by the gamma and epsilon chains, while a peripheral stalk is formed by the delta and b chains.

The protein localises to the cell membrane. Its function is as follows. F(1)F(0) ATP synthase produces ATP from ADP in the presence of a proton or sodium gradient. F-type ATPases consist of two structural domains, F(1) containing the extramembraneous catalytic core and F(0) containing the membrane proton channel, linked together by a central stalk and a peripheral stalk. During catalysis, ATP synthesis in the catalytic domain of F(1) is coupled via a rotary mechanism of the central stalk subunits to proton translocation. Functionally, this protein is part of the stalk that links CF(0) to CF(1). It either transmits conformational changes from CF(0) to CF(1) or is implicated in proton conduction. The protein is ATP synthase subunit delta of Oenococcus oeni (strain ATCC BAA-331 / PSU-1).